A 382-amino-acid chain; its full sequence is MNLKEKTRALFAEIFGYPATHTIQAPGRVNLIGEHTDYNDGFVLPCAIDYQTVISCAPRDDRTVRVIAADYDNQVDEFSLEAPIVTHDSQQWSNYVRGVVKHLQQRNNAFGGVDMVISGNVPQGAGLSSSASLEVAVGTVFQQLYHLPLDGAQIALNGQEAENQFVGCNCGIMDQLISALGKKDHALLIDCRTLGAKAVSMPKGVAVVIINSNFKRTLVGSEYNTRREQCETGARFFQQPALRDVSLEAFNAVASELDPVVAKRVRHVLSENARTVEAASALEKGDLQRMGQLMAESHASMRDDFEITVPQIDTLVDIVKATIGDQGGVRMTGGGFGGCVVALIPEDLVPAVQQAVAQQYEAKTGIKETFYVCKPSQGAGQC.

E34–D37 contributes to the substrate binding site. G124 to S130 provides a ligand contact to ATP. Mg(2+) contacts are provided by S130 and E162. D174 acts as the Proton acceptor in catalysis. Y223 is a binding site for substrate.

It belongs to the GHMP kinase family. GalK subfamily.

It localises to the cytoplasm. It carries out the reaction alpha-D-galactose + ATP = alpha-D-galactose 1-phosphate + ADP + H(+). Its pathway is carbohydrate metabolism; galactose metabolism. Functionally, catalyzes the transfer of the gamma-phosphate of ATP to D-galactose to form alpha-D-galactose-1-phosphate (Gal-1-P). This is Galactokinase from Salmonella schwarzengrund (strain CVM19633).